Reading from the N-terminus, the 132-residue chain is Prefoldin subunit alpha (132 aa).

This sequence belongs to the prefoldin subunit alpha family. In terms of assembly, heterohexamer of two alpha and four beta subunits.

The protein resides in the cytoplasm. Molecular chaperone capable of stabilizing a range of proteins. Seems to fulfill an ATP-independent, HSP70-like function in archaeal de novo protein folding. The protein is Prefoldin subunit alpha (pfdA) of Pyrobaculum aerophilum (strain ATCC 51768 / DSM 7523 / JCM 9630 / CIP 104966 / NBRC 100827 / IM2).